The primary structure comprises 84 residues: UPF0248 protein PF1300 (84 aa).

Belongs to the UPF0248 family.

This Pyrococcus furiosus (strain ATCC 43587 / DSM 3638 / JCM 8422 / Vc1) protein is UPF0248 protein PF1300.